Reading from the N-terminus, the 150-residue chain is Endoribonuclease YbeY (150 aa).

Positions 116, 120, and 126 each coordinate Zn(2+).

This sequence belongs to the endoribonuclease YbeY family. Requires Zn(2+) as cofactor.

The protein localises to the cytoplasm. In terms of biological role, single strand-specific metallo-endoribonuclease involved in late-stage 70S ribosome quality control and in maturation of the 3' terminus of the 16S rRNA. This is Endoribonuclease YbeY from Beutenbergia cavernae (strain ATCC BAA-8 / DSM 12333 / CCUG 43141 / JCM 11478 / NBRC 16432 / NCIMB 13614 / HKI 0122).